The following is a 327-amino-acid chain: MSFLGGFFGPICEIDVALNDGETRKMAEMKTEDGKVEKHYLFYDGESVSGKVNLAFKQPGKRLEHQGIRIEFVGQIELFNDKSNTHEFVNLVKELALPGELTQSRSYDFEFMQVEKPYESYIGANVRLRYFLKVTIVRRLTDLVKEYDLIVHQLATYPDVNNSIKMEVGIEDCLHIEFEYNKSKYHLKDVIVGKIYFLLVRIKIQHMELQLIKKEITGIGPSTTTETETIAKYEIMDGAPVKGESIPIRLFLAGYDPTPTMRDVNKKFSVRYFLNLVLVDEEDRRYFKQQEIILWRKAPEKLRKQRTNFHQRFESPDSQASAEQPEM.

Residues 306 to 327 (RTNFHQRFESPDSQASAEQPEM) are disordered. Ser315 carries the post-translational modification Phosphoserine. Polar residues predominate over residues 316-327 (PDSQASAEQPEM).

It belongs to the VPS26 family. As to quaternary structure, component of the heterotrimeric retromer cargo-selective complex (CSC), also described as vacuolar protein sorting subcomplex (VPS), formed by VPS26 (VPS26A or VPS26B), VPS29 and VPS35. The CSC has a highly elongated structure with VPS26 and VPS29 binding independently at opposite distal ends of VPS35 as central platform. The CSC is believed to associate with variable sorting nexins to form functionally distinct retromer complex variants. The originally described retromer complex (also called SNX-BAR retromer) is a pentamer containing the CSC and a heterodimeric membrane-deforming subcomplex formed between SNX1 or SNX2 and SNX5 or SNX6 (also called SNX-BAR subcomplex); the respective CSC and SNX-BAR subcomplexes associate with low affinity. The CSC associates with SNX3 to form a SNX3-retromer complex. The CSC associates with SNX27, the WASH complex and the SNX-BAR subcomplex to form the SNX27-retromer complex. Interacts with VPS29, VPS35, SNX27. Interacts with SNX1, SNX2, SNX5, SNX6, SNX3, RAB7A, ECPAS, EHD1, WASHC5, SORL1.

The protein resides in the cytoplasm. The protein localises to the endosome membrane. Its subcellular location is the early endosome. Its function is as follows. Acts as a component of the retromer cargo-selective complex (CSC). The CSC is believed to be the core functional component of retromer or respective retromer complex variants acting to prevent missorting of selected transmembrane cargo proteins into the lysosomal degradation pathway. The recruitment of the CSC to the endosomal membrane involves RAB7A and SNX3. The SNX-BAR retromer mediates retrograde transport of cargo proteins from endosomes to the trans-Golgi network (TGN) and is involved in endosome-to-plasma membrane transport for cargo protein recycling. The SNX3-retromer mediates the retrograde endosome-to-TGN transport of WLS distinct from the SNX-BAR retromer pathway. The SNX27-retromer is believed to be involved in endosome-to-plasma membrane trafficking and recycling of a broad spectrum of cargo proteins. The CSC complex seems to act as recruitment hub for other proteins, such as the WASH complex and TBC1D5. Required for retrograde transport of lysosomal enzyme receptor IGF2R. Required to regulate transcytosis of the polymeric immunoglobulin receptor (pIgR-pIgA). Required for the endosomal localization of WASHC2 (indicative for the WASH complex). Required for the endosomal localization of TBC1D5. Mediates retromer cargo recognition of SORL1 and is involved in trafficking of SORL1 implicated in sorting and processing of APP. Involved in retromer-independent lysosomal sorting of F2R. Involved in recycling of ADRB2. Acts redundantly with VSP26B in SNX-27 mediated endocytic recycling of SLC2A1/GLUT1. Enhances the affinity of SNX27 for PDZ-binding motifs in cargo proteins. This chain is Vacuolar protein sorting-associated protein 26A (Vps26a), found in Mus musculus (Mouse).